A 207-amino-acid polypeptide reads, in one-letter code: MARYIGPKAKLSRREGTDLFLKSARRSIADKSKFDTKPGQHGRTSGQRTSDFGLQLREKQKVKRMYGVLEKQFRRYFEAADKKKGNTGANLLSLLESRLDNVVYRMGFGSTRSEARQLVSHKAITVNGQSVNIPSYMVKVGDVVAVREKSKKQARIVEALQLAGQVGFPAWVEVSADKAEGTFKKSPDRDEFGADINESLIVELYSR.

Positions 30 to 53 (DKSKFDTKPGQHGRTSGQRTSDFG) are disordered. Residues 42–52 (GRTSGQRTSDF) are compositionally biased toward polar residues. The S4 RNA-binding domain occupies 97-157 (SRLDNVVYRM…EKSKKQARIV (61 aa)).

This sequence belongs to the universal ribosomal protein uS4 family. In terms of assembly, part of the 30S ribosomal subunit. Contacts protein S5. The interaction surface between S4 and S5 is involved in control of translational fidelity.

In terms of biological role, one of the primary rRNA binding proteins, it binds directly to 16S rRNA where it nucleates assembly of the body of the 30S subunit. Functionally, with S5 and S12 plays an important role in translational accuracy. The chain is Small ribosomal subunit protein uS4 from Delftia acidovorans (strain DSM 14801 / SPH-1).